Here is a 128-residue protein sequence, read N- to C-terminus: 3-aminoacrylate deaminase RutC (128 aa).

The protein belongs to the RutC family.

It carries out the reaction (Z)-3-aminoacrylate + H2O + H(+) = 3-oxopropanoate + NH4(+). Its function is as follows. Involved in pyrimidine catabolism. Catalyzes the deamination of 3-aminoacrylate to malonic semialdehyde, a reaction that can also occur spontaneously. RutC may facilitate the reaction and modulate the metabolic fitness, rather than catalyzing essential functions. The sequence is that of 3-aminoacrylate deaminase RutC from Pantoea ananatis (strain LMG 20103).